Here is a 362-residue protein sequence, read N- to C-terminus: Molybdenum import ATP-binding protein ModC (362 aa).

Positions 2-236 (VSPIEVRLQM…LDLPLAMGDD (235 aa)) constitute an ABC transporter domain. 34–41 (GPSGSGKT) is a binding site for ATP. A Mop domain is found at 297–362 (HSSILNRLPV…AQIKAVAVLA (66 aa)).

The protein belongs to the ABC transporter superfamily. Molybdate importer (TC 3.A.1.8) family. In terms of assembly, the complex is composed of two ATP-binding proteins (ModC), two transmembrane proteins (ModB) and a solute-binding protein (ModA).

Its subcellular location is the cell inner membrane. It catalyses the reaction molybdate(out) + ATP + H2O = molybdate(in) + ADP + phosphate + H(+). Functionally, part of the ABC transporter complex ModABC involved in molybdenum import. Responsible for energy coupling to the transport system. The polypeptide is Molybdenum import ATP-binding protein ModC (Pseudomonas syringae pv. tomato (strain ATCC BAA-871 / DC3000)).